A 188-amino-acid chain; its full sequence is Deoxyuridine 5'-triphosphate nucleotidohydrolase (188 aa).

The tract at residues methionine 1–isoleucine 34 is disordered.

This sequence belongs to the dUTPase family. Mg(2+) is required as a cofactor.

The enzyme catalyses dUTP + H2O = dUMP + diphosphate + H(+). In terms of biological role, this enzyme is involved in nucleotide metabolism: it produces dUMP, the immediate precursor of thymidine nucleotides and it decreases the intracellular concentration of dUTP so that uracil cannot be incorporated into DNA. In Ictaluridae (bullhead catfishes), this protein is Deoxyuridine 5'-triphosphate nucleotidohydrolase (49).